We begin with the raw amino-acid sequence, 729 residues long: Fatty acid oxidation complex subunit alpha (729 aa).

An enoyl-CoA hydratase/isomerase region spans residues 1–189 (MLYKGDTLYL…KIGLVDGVVK (189 aa)). Asp296 lines the substrate pocket. Residues 311–729 (ETPKQAAVLG…ARPVGDLKTA (419 aa)) form a 3-hydroxyacyl-CoA dehydrogenase region. NAD(+) is bound by residues Met324, Asp343, 400–402 (VVE), Lys407, and Ser429. His450 acts as the For 3-hydroxyacyl-CoA dehydrogenase activity in catalysis. Asn453 serves as a coordination point for NAD(+). The substrate site is built by Asn500 and Tyr660. The tract at residues 708–729 (RHNEPYYPPVEPARPVGDLKTA) is disordered.

It in the N-terminal section; belongs to the enoyl-CoA hydratase/isomerase family. The protein in the C-terminal section; belongs to the 3-hydroxyacyl-CoA dehydrogenase family. As to quaternary structure, heterotetramer of two alpha chains (FadB) and two beta chains (FadA).

It catalyses the reaction a (3S)-3-hydroxyacyl-CoA + NAD(+) = a 3-oxoacyl-CoA + NADH + H(+). It carries out the reaction a (3S)-3-hydroxyacyl-CoA = a (2E)-enoyl-CoA + H2O. The enzyme catalyses a 4-saturated-(3S)-3-hydroxyacyl-CoA = a (3E)-enoyl-CoA + H2O. The catalysed reaction is (3S)-3-hydroxybutanoyl-CoA = (3R)-3-hydroxybutanoyl-CoA. It catalyses the reaction a (3Z)-enoyl-CoA = a 4-saturated (2E)-enoyl-CoA. It carries out the reaction a (3E)-enoyl-CoA = a 4-saturated (2E)-enoyl-CoA. Its pathway is lipid metabolism; fatty acid beta-oxidation. Involved in the aerobic and anaerobic degradation of long-chain fatty acids via beta-oxidation cycle. Catalyzes the formation of 3-oxoacyl-CoA from enoyl-CoA via L-3-hydroxyacyl-CoA. It can also use D-3-hydroxyacyl-CoA and cis-3-enoyl-CoA as substrate. The polypeptide is Fatty acid oxidation complex subunit alpha (Escherichia coli O6:H1 (strain CFT073 / ATCC 700928 / UPEC)).